Consider the following 403-residue polypeptide: Protein IQ-DOMAIN 23 (403 aa).

Residues 1–43 (MGFFGRLFGSKKKSDKAASSRDKRRWSFTTRSSNSSKRAPAVT) are disordered. A Nuclear localization signal motif is present at residues 10–17 (SKKKSDKA). Polar residues predominate over residues 27-43 (SFTTRSSNSSKRAPAVT). The segment at 115-133 (QENIAAMKIQSAFRGYLAR) is calmodulin-binding. IQ domains follow at residues 116–144 (ENIA…ALVK) and 145–167 (LQAL…RMQT). Disordered stretches follow at residues 176–208 (RARA…RSLH), 242–301 (ILEV…PTSR), and 381–403 (GGDS…SFLV). A compositionally biased stretch (basic and acidic residues) spans 257 to 267 (LRSERNNESPR).

Belongs to the IQD family. As to quaternary structure, binds to multiple calmodulin (CaM) in the presence of Ca(2+) and CaM-like proteins.

The protein localises to the nucleus. Its subcellular location is the nucleolus. It is found in the cytoplasm. It localises to the cytoskeleton. The protein resides in the cell membrane. In terms of biological role, may be involved in cooperative interactions with calmodulins or calmodulin-like proteins. Recruits calmodulin proteins to microtubules, thus being a potential scaffold in cellular signaling and trafficking. May associate with nucleic acids and regulate gene expression at the transcriptional or post-transcriptional level. This Arabidopsis thaliana (Mouse-ear cress) protein is Protein IQ-DOMAIN 23.